Here is a 134-residue protein sequence, read N- to C-terminus: MRYFFWSLLAIAAVLPISIAQAGSVRIEQAPNLQMSGMSGGGRASDCGYIGNRPSEQVTISPQYVEQSGYLRISVTAAGNPTLLIEGPSGRFCSVGQGGRNPQHVGVWPAGVYNIYVGDRQGQSHPYQLNLSGR.

This is an uncharacterized protein from Synechococcus elongatus (strain ATCC 33912 / PCC 7942 / FACHB-805) (Anacystis nidulans R2).